A 441-amino-acid chain; its full sequence is Ribulose bisphosphate carboxylase large chain (441 aa).

Residue Lys5 is modified to N6,N6,N6-trimethyllysine. Substrate is bound by residues Asn114 and Thr164. Lys166 serves as the catalytic Proton acceptor. Substrate is bound at residue Lys168. Residues Lys192, Asp194, and Glu195 each coordinate Mg(2+). Lys192 carries the post-translational modification N6-carboxylysine. Residue His285 is the Proton acceptor of the active site. Substrate contacts are provided by Arg286, His318, and Ser370.

Belongs to the RuBisCO large chain family. Type I subfamily. As to quaternary structure, heterohexadecamer of 8 large chains and 8 small chains; disulfide-linked. The disulfide link is formed within the large subunit homodimers. The cofactor is Mg(2+). In terms of processing, the disulfide bond which can form in the large chain dimeric partners within the hexadecamer appears to be associated with oxidative stress and protein turnover.

Its subcellular location is the plastid. It is found in the chloroplast. It catalyses the reaction 2 (2R)-3-phosphoglycerate + 2 H(+) = D-ribulose 1,5-bisphosphate + CO2 + H2O. It carries out the reaction D-ribulose 1,5-bisphosphate + O2 = 2-phosphoglycolate + (2R)-3-phosphoglycerate + 2 H(+). Functionally, ruBisCO catalyzes two reactions: the carboxylation of D-ribulose 1,5-bisphosphate, the primary event in carbon dioxide fixation, as well as the oxidative fragmentation of the pentose substrate in the photorespiration process. Both reactions occur simultaneously and in competition at the same active site. The sequence is that of Ribulose bisphosphate carboxylase large chain from Begonia metallica x Begonia sanguinea.